A 636-amino-acid chain; its full sequence is Multicopper oxidase CTB12 (636 aa).

The signal sequence occupies residues 1–23; sequence MWSVRLYPLALTLLFQCVSPAAA. A Plastocyanin-like 1 domain is found at 62–168; the sequence is AGIGFREAIF…LYGAVVIAPD (107 aa). His104 and His106 together coordinate Cu cation. Residue Asn136 is glycosylated (N-linked (GlcNAc...) asparagine). His148 and His150 together coordinate Cu cation. A glycan (N-linked (GlcNAc...) asparagine) is linked at Asn304. Residues 318-381 enclose the Plastocyanin-like 2 domain; that stretch reads LTFVNPGGLY…QEKARHVVRV (64 aa). An N-linked (GlcNAc...) asparagine glycan is attached at Asn472. The region spanning 486–613 is the Plastocyanin-like 3 domain; sequence NVEDVPATEL…GGMGMVVLDG (128 aa). Residues His519, His522, and His524 each contribute to the Cu cation site. The N-linked (GlcNAc...) asparagine glycan is linked to Asn576. Positions 595, 596, 597, and 601 each coordinate Cu cation.

It belongs to the multicopper oxidase family.

Its pathway is mycotoxin biosynthesis. In terms of biological role, multicopper oxidase; part of the gene cluster that mediates the biosynthesis of cercosporin, a light-activated, non-host-selective toxin. The perylenequinone chromophore of cercosporin absorbs light energy to attain an electronically-activated triplet state and produces active oxygen species such as the hydroxyl radical, superoxide, hydrogen peroxide or singlet oxygen upon reaction with oxygen molecules. These reactive oxygen species cause damage to various cellular components including lipids, proteins and nucleic acids. The first step of cercosporin biosynthesis is performed by the polyketide synthase CTB1 which catalyzes the formation of nor-toralactone. The starter unit acyltransferase (SAT) domain of CTB1 initiates polyketide extension by the selective utilization of acetyl-CoA, which is elongated to the heptaketide in the beta-ketoacyl synthase (KS) domain by successive condensations with six malonyl units introduced by the malonyl acyltransferase (MAT) domain. The product template (PT) domain catalyzes C4-C9 and C2-C11 aldol cyclizations and dehydrations to a trihydroxynaphthalene, which is thought to be delivered to the thioesterase (TE) domain for product release. The bifunctional enzyme CTB3 then methylates nor-toralactone to toralactone before conducting an unusual oxidative aromatic ring opening. The O-methyltransferase CTB2 further methylates the nascent OH-6 of the CBT3 product, blocking further oxidation at this site before the reductase CTB6 reduces the 2-oxopropyl ketone at position C7, giving naphthalene. The FAD-dependent monooxygenase CTB5 in concert with the multicopper oxidase CTB12 are responsible for homodimerization of naphthalene with CTB7 installing the dioxepine moiety, finally producing cercosporin. The fasciclin domain-containing protein CTB11 might act with CTB5 and CTB12 whereas the roles of CTB9 and CTB10 have still to be elucidated. In Cercospora beticola (Sugarbeet leaf spot fungus), this protein is Multicopper oxidase CTB12.